The sequence spans 478 residues: Nuclear distribution protein PAC1 (478 aa).

The LisH domain maps to 9 to 41 (QAEELHKAMIAYLLSANLPKSAAALREELADSV). Positions 60 to 87 (TSVVRLQKKIMDLESRNNALQSELDSAT) form a coiled coil. WD repeat units lie at residues 113-154 (SHRE…RTIK), 156-196 (HTKA…KNIR), 200-247 (GHDH…CVKT), 250-289 (GHVD…TKST), 292-352 (GHEH…IKTL), 354-393 (GHDN…KCVR), 398-439 (AHGH…AASA), and 440-477 (INGV…RVFA).

It belongs to the WD repeat LIS1/nudF family. As to quaternary structure, self-associates. Interacts with NDL1 and dynein.

It is found in the cytoplasm. The protein localises to the cytoskeleton. The protein resides in the spindle pole. Positively regulates the activity of the minus-end directed microtubule motor protein dynein. May enhance dynein-mediated microtubule sliding by targeting dynein to the microtubule plus end. Required for nuclear migration during vegetative growth as well as development. Required for retrograde early endosome (EE) transport from the hyphal tip. Required for localization of dynein to the mitotic spindle poles. Recruits additional proteins to the dynein complex at SPBs. This Paracoccidioides brasiliensis (strain Pb18) protein is Nuclear distribution protein PAC1.